We begin with the raw amino-acid sequence, 158 residues long: 6,7-dimethyl-8-ribityllumazine synthase (158 aa).

Residues Phe-24, 58–60, and 82–84 contribute to the 5-amino-6-(D-ribitylamino)uracil site; these read AFE and AVI. 87–88 provides a ligand contact to (2S)-2-hydroxy-3-oxobutyl phosphate; sequence GT. His-90 acts as the Proton donor in catalysis. Phe-115 provides a ligand contact to 5-amino-6-(D-ribitylamino)uracil. (2S)-2-hydroxy-3-oxobutyl phosphate is bound at residue Arg-129.

This sequence belongs to the DMRL synthase family. In terms of assembly, forms an icosahedral capsid composed of 60 subunits, arranged as a dodecamer of pentamers.

The enzyme catalyses (2S)-2-hydroxy-3-oxobutyl phosphate + 5-amino-6-(D-ribitylamino)uracil = 6,7-dimethyl-8-(1-D-ribityl)lumazine + phosphate + 2 H2O + H(+). It functions in the pathway cofactor biosynthesis; riboflavin biosynthesis; riboflavin from 2-hydroxy-3-oxobutyl phosphate and 5-amino-6-(D-ribitylamino)uracil: step 1/2. Its function is as follows. Catalyzes the formation of 6,7-dimethyl-8-ribityllumazine by condensation of 5-amino-6-(D-ribitylamino)uracil with 3,4-dihydroxy-2-butanone 4-phosphate. This is the penultimate step in the biosynthesis of riboflavin. The protein is 6,7-dimethyl-8-ribityllumazine synthase of Stutzerimonas stutzeri (strain A1501) (Pseudomonas stutzeri).